A 400-amino-acid chain; its full sequence is Formate-dependent phosphoribosylglycinamide formyltransferase (400 aa).

N(1)-(5-phospho-beta-D-ribosyl)glycinamide-binding positions include 22–23 (EL) and E82. Residues R115, K156, 161 to 166 (SSGKGQ), 196 to 199 (EGFI), and E204 contribute to the ATP site. Positions 120–309 (RLAAETLCLP…EFALHARAIL (190 aa)) constitute an ATP-grasp domain. Residues E268 and E280 each contribute to the Mg(2+) site. N(1)-(5-phospho-beta-D-ribosyl)glycinamide-binding positions include D287, K361, and 368–369 (RR).

Belongs to the PurK/PurT family. Homodimer.

It carries out the reaction N(1)-(5-phospho-beta-D-ribosyl)glycinamide + formate + ATP = N(2)-formyl-N(1)-(5-phospho-beta-D-ribosyl)glycinamide + ADP + phosphate + H(+). Its pathway is purine metabolism; IMP biosynthesis via de novo pathway; N(2)-formyl-N(1)-(5-phospho-D-ribosyl)glycinamide from N(1)-(5-phospho-D-ribosyl)glycinamide (formate route): step 1/1. Involved in the de novo purine biosynthesis. Catalyzes the transfer of formate to 5-phospho-ribosyl-glycinamide (GAR), producing 5-phospho-ribosyl-N-formylglycinamide (FGAR). Formate is provided by PurU via hydrolysis of 10-formyl-tetrahydrofolate. The protein is Formate-dependent phosphoribosylglycinamide formyltransferase of Xanthomonas euvesicatoria pv. vesicatoria (strain 85-10) (Xanthomonas campestris pv. vesicatoria).